Here is a 403-residue protein sequence, read N- to C-terminus: Farnesyl pyrophosphate synthase (403 aa).

2 residues coordinate Mg(2+): D156 and D160. The DDXXD motif motif lies at 156-160 (DDLAD).

It belongs to the FPP/GGPP synthase family. Requires Mg(2+) as cofactor.

The enzyme catalyses isopentenyl diphosphate + (2E)-geranyl diphosphate = (2Z,6E)-farnesyl diphosphate + diphosphate. It participates in pheromone biosynthesis. Functionally, farnesyl pyrophosphate synthase involved in pheromone biosynthesis by catalyzing the formation of (2Z,6E)-farnesyl diphosphate. In Nezara viridula (Southern green stink bug), this protein is Farnesyl pyrophosphate synthase.